The chain runs to 272 residues: MTRIESTFETLKAQNKKALIPYVMAGDPNPSNFVGLLHDLVKHGADMIEVGLPFSDPMADGPTVALAGERALAAGTSTRDALKMVKEFRQQDTQTPIILMGYLNPVEIIGYDNFVSLCEQSGVDGILMVDLPPAEAGSFTQHLTEHAMNEIFLLSPTTLAERRQQVLTHCGGYIYYVSLKGVTGSATLDTDDVAKQVQAIKAETDLPVCVGFGIRDATSAKAIGAHADGIIVGSALVQNFADIDANDITAVANAQQKIMAKMDELRGALDSL.

Catalysis depends on proton acceptor residues glutamate 49 and aspartate 60.

It belongs to the TrpA family. In terms of assembly, tetramer of two alpha and two beta chains.

It catalyses the reaction (1S,2R)-1-C-(indol-3-yl)glycerol 3-phosphate + L-serine = D-glyceraldehyde 3-phosphate + L-tryptophan + H2O. It participates in amino-acid biosynthesis; L-tryptophan biosynthesis; L-tryptophan from chorismate: step 5/5. In terms of biological role, the alpha subunit is responsible for the aldol cleavage of indoleglycerol phosphate to indole and glyceraldehyde 3-phosphate. This Psychrobacter cryohalolentis (strain ATCC BAA-1226 / DSM 17306 / VKM B-2378 / K5) protein is Tryptophan synthase alpha chain.